The chain runs to 180 residues: dCTP deaminase, dUMP-forming (180 aa).

DCTP is bound by residues 96–101 (RSSLGR), Asp113, 121–123 (TLE), Gln142, Tyr156, and Gln163. Residue Glu123 is the Proton donor/acceptor of the active site.

The protein belongs to the dCTP deaminase family. Homotrimer.

The catalysed reaction is dCTP + 2 H2O = dUMP + NH4(+) + diphosphate. It participates in pyrimidine metabolism; dUMP biosynthesis; dUMP from dCTP: step 1/1. In terms of biological role, bifunctional enzyme that catalyzes both the deamination of dCTP to dUTP and the hydrolysis of dUTP to dUMP without releasing the toxic dUTP intermediate. The polypeptide is dCTP deaminase, dUMP-forming (Aquifex aeolicus (strain VF5)).